Consider the following 536-residue polypeptide: G-protein coupled receptor Mth2 (536 aa).

The Extracellular portion of the chain corresponds to 1-210 (MAERDHYHTI…DDNSTVKIIN (210 aa)). Intrachain disulfides connect cysteine 17/cysteine 71, cysteine 73/cysteine 78, cysteine 82/cysteine 177, cysteine 83/cysteine 96, and cysteine 138/cysteine 197. Asparagine 24 and asparagine 33 each carry an N-linked (GlcNAc...) asparagine glycan. Asparagine 103, asparagine 113, asparagine 118, asparagine 159, asparagine 184, and asparagine 203 each carry an N-linked (GlcNAc...) asparagine glycan. The helical transmembrane segment at 211 to 231 (AYAMMFSIPFMMLTIAVYLLI) threads the bilayer. Residues 232–241 (PELRNQHGKS) are Cytoplasmic-facing. The helical transmembrane segment at 242–262 (LVCYLVGLTVGYTSLCYVQLY) threads the bilayer. Over 263–273 (QVDATGDACKV) the chain is Extracellular. A helical transmembrane segment spans residues 274–294 (FGYTAYFFFMGAYMWLSVISF). At 295-314 (DLWHNFRGTRGINRFQEKKR) the chain is on the cytoplasmic side. A helical transmembrane segment spans residues 315 to 335 (FLFYSLYSWGIAVVFLAFTYI). Topologically, residues 336-365 (AQELTNLPAYLKPGIGDGVYCWLDMSNWAA) are extracellular. The chain crosses the membrane as a helical span at residues 366–386 (MIYFYGPILVIVVANTIMFIM). Over 387–417 (TAIKIHGVQREMARIIASENSTKNLRTEKDK) the chain is Cytoplasmic. A helical membrane pass occupies residues 418–438 (FGLFLRLFLIMGITWLTELIS). Over 439–449 (YFVGSDKGWSK) the chain is Extracellular. A helical membrane pass occupies residues 450 to 470 (LFYISDLANAMQGFLIFMLFV). At 471–536 (MKKKVKHLIT…VDPQKTTIFR (66 aa)) the chain is on the cytoplasmic side. The disordered stretch occupies residues 487–506 (RDGSNQRQSQYSTKTTSSSV). Residues 492–505 (QRQSQYSTKTTSSS) are compositionally biased toward low complexity.

The protein belongs to the G-protein coupled receptor 2 family. Mth subfamily. In terms of assembly, homodimer.

It localises to the cell membrane. Its function is as follows. Involved in biological aging and stress response. Essential for adult survival. The chain is G-protein coupled receptor Mth2 (mth2) from Drosophila yakuba (Fruit fly).